The following is a 535-amino-acid chain: MAQQSMKVRPVLLKRSSLESVELVKQPHHRRSKSQQVRFKEDGNIKNPTGVTEVNTQTPEDPGVMGKAQASRHHHPTTYSLSFPRSHKAGGFRSISIQTSPSLRKHFPVFKRKKLTTSKSLVEMPTASPSAIQVNGNLSEQDIVSSDLAFLRLAQHLEDGPRRLKIPHPFLPRMPKVQSNGPVSFCLESGTWMSSEKATAAIQVPDDICHSPTWEARESALSPESSAEESNSIPALISMCPGDGQRVMTSELERMPPCSNTNSSASNMPGTEKLTPELLLPKDNPDDKDLGLPSSQSKKMCVPSPPRTHSSPEPGSRSQPVHLGRSSDCPASGDNHQDLESLRSSSASKSVPVCWEHVTKLPSQSDTPELQTGVGSEQLPASIPRQENRAQSSREIGGSNHSHLAQGELCDLQGRLQSVEESLHSNQEKIKVLLNVIQDLEKAHALTEGRNFYRTGQDLNNCSTCQNTACIIYSVEYDFRQQEGRFHEVLQSLEEAEPTEEAPSPPKSPAEAPVPEKQDLRRKSKKVKKKCFWWI.

Disordered regions lie at residues 23–85 (LVKQ…SFPR), 215–346 (EARE…RSSS), and 360–387 (KLPS…PRQE). Polar residues predominate over residues 46–59 (KNPTGVTEVNTQTP). Low complexity predominate over residues 219 to 232 (SALSPESSAEESNS). Composition is skewed to polar residues over residues 258 to 269 (CSNTNSSASNMP), 307 to 319 (RTHS…SRSQ), and 361 to 375 (LPSQ…TGVG). Residues 411 to 448 (DLQGRLQSVEESLHSNQEKIKVLLNVIQDLEKAHALTE) adopt a coiled-coil conformation. The disordered stretch occupies residues 493–528 (LEEAEPTEEAPSPPKSPAEAPVPEKQDLRRKSKKVK).

Belongs to the INSYN2 family.

In Mus musculus (Mouse), this protein is INSYN2B protein (Insyn2b).